The following is a 491-amino-acid chain: Cytochrome P450 2F1 (491 aa).

Position 436 (C436) interacts with heme.

It belongs to the cytochrome P450 family. Heme serves as cofactor. Expressed in lung. Rarely detected in liver and placenta.

The protein localises to the endoplasmic reticulum membrane. Its subcellular location is the microsome membrane. The enzyme catalyses an organic molecule + reduced [NADPH--hemoprotein reductase] + O2 = an alcohol + oxidized [NADPH--hemoprotein reductase] + H2O + H(+). Its function is as follows. May be involved in the metabolism of various pneumotoxicants including naphthalene. Is able to dealkylate ethoxycoumarin, propoxycoumarin, and pentoxyresorufin but possesses no activity toward ethoxyresorufin and only trace dearylation activity toward benzyloxyresorufin. Bioactivates 3-methylindole (3MI) by dehydrogenation to the putative electrophile 3-methylene-indolenine. This chain is Cytochrome P450 2F1 (CYP2F1), found in Homo sapiens (Human).